A 131-amino-acid chain; its full sequence is MRFGETDAAGVLHFQQLLRWCHEAYEESLERFGLEPATLFPTPGQQLNLLLPITHCSADFLAPLICGDPLAIALTPQWLDPTAFEVAYSFSSAGRPVARGLTRHQCIAAADRRRAPLPEGVQRWLQASVQT.

Residue D7 is part of the active site.

This sequence belongs to the 4-hydroxybenzoyl-CoA thioesterase family. DHNA-CoA hydrolase subfamily.

It catalyses the reaction 1,4-dihydroxy-2-naphthoyl-CoA + H2O = 1,4-dihydroxy-2-naphthoate + CoA + H(+). It functions in the pathway cofactor biosynthesis; phylloquinone biosynthesis. It participates in quinol/quinone metabolism; 1,4-dihydroxy-2-naphthoate biosynthesis; 1,4-dihydroxy-2-naphthoate from chorismate: step 7/7. Catalyzes the hydrolysis of 1,4-dihydroxy-2-naphthoyl-CoA (DHNA-CoA) to 1,4-dihydroxy-2-naphthoate (DHNA), a reaction involved in phylloquinone (vitamin K1) biosynthesis. The protein is 1,4-dihydroxy-2-naphthoyl-CoA hydrolase of Synechococcus sp. (strain RCC307).